The following is a 286-amino-acid chain: Ribosomal RNA small subunit methyltransferase A (286 aa).

S-adenosyl-L-methionine-binding residues include Asn28, Leu30, Gly55, Glu77, Asp103, and Asn123.

This sequence belongs to the class I-like SAM-binding methyltransferase superfamily. rRNA adenine N(6)-methyltransferase family. RsmA subfamily.

The protein resides in the cytoplasm. The enzyme catalyses adenosine(1518)/adenosine(1519) in 16S rRNA + 4 S-adenosyl-L-methionine = N(6)-dimethyladenosine(1518)/N(6)-dimethyladenosine(1519) in 16S rRNA + 4 S-adenosyl-L-homocysteine + 4 H(+). In terms of biological role, specifically dimethylates two adjacent adenosines (A1518 and A1519) in the loop of a conserved hairpin near the 3'-end of 16S rRNA in the 30S particle. May play a critical role in biogenesis of 30S subunits. This chain is Ribosomal RNA small subunit methyltransferase A, found in Bradyrhizobium sp. (strain BTAi1 / ATCC BAA-1182).